The chain runs to 101 residues: NADH-quinone oxidoreductase subunit K (101 aa).

A run of 3 helical transmembrane segments spans residues 4-24 (LTHF…GIFL), 30-50 (IILL…FIAF), and 61-81 (IFVF…LAIL).

It belongs to the complex I subunit 4L family. As to quaternary structure, NDH-1 is composed of 14 different subunits. Subunits NuoA, H, J, K, L, M, N constitute the membrane sector of the complex.

The protein localises to the cell inner membrane. It carries out the reaction a quinone + NADH + 5 H(+)(in) = a quinol + NAD(+) + 4 H(+)(out). In terms of biological role, NDH-1 shuttles electrons from NADH, via FMN and iron-sulfur (Fe-S) centers, to quinones in the respiratory chain. The immediate electron acceptor for the enzyme in this species is believed to be ubiquinone. Couples the redox reaction to proton translocation (for every two electrons transferred, four hydrogen ions are translocated across the cytoplasmic membrane), and thus conserves the redox energy in a proton gradient. This Chromobacterium violaceum (strain ATCC 12472 / DSM 30191 / JCM 1249 / CCUG 213 / NBRC 12614 / NCIMB 9131 / NCTC 9757 / MK) protein is NADH-quinone oxidoreductase subunit K.